The sequence spans 868 residues: LPS-assembly protein LptD (868 aa).

The N-terminal stretch at 1-24 is a signal peptide; sequence MLKGIHKYLLMCFGTVLFTVQANA.

This sequence belongs to the LptD family. In terms of assembly, component of the lipopolysaccharide transport and assembly complex. Interacts with LptE and LptA.

The protein resides in the cell outer membrane. Functionally, together with LptE, is involved in the assembly of lipopolysaccharide (LPS) at the surface of the outer membrane. The sequence is that of LPS-assembly protein LptD from Francisella tularensis subsp. novicida (strain U112).